A 126-amino-acid chain; its full sequence is Large ribosomal subunit protein bL17 (126 aa).

This sequence belongs to the bacterial ribosomal protein bL17 family. Part of the 50S ribosomal subunit. Contacts protein L32.

This is Large ribosomal subunit protein bL17 from Lactococcus lactis subsp. lactis (strain IL1403) (Streptococcus lactis).